A 622-amino-acid chain; its full sequence is Probable potassium transport system protein Kup (622 aa).

12 helical membrane-spanning segments follow: residues 8 to 28 (LAAL…TSVL), 50 to 70 (ILSI…VVLV), 103 to 123 (LAVG…TPAI), 137 to 157 (PHFK…LFAV), 168 to 188 (FFGP…LAHI), 203 to 223 (ALGF…AVVL), 247 to 267 (WFGV…ALLL), 285 to 305 (ALIP…QALI), 337 to 357 (IYMP…VVMF), 366 to 386 (AYGI…FFVI), 393 to 413 (PLAL…AFFA), and 419 to 439 (LFQG…LMMT).

It belongs to the HAK/KUP transporter (TC 2.A.72) family.

It is found in the cell inner membrane. It carries out the reaction K(+)(in) + H(+)(in) = K(+)(out) + H(+)(out). Functionally, transport of potassium into the cell. Likely operates as a K(+):H(+) symporter. The sequence is that of Probable potassium transport system protein Kup from Verminephrobacter eiseniae (strain EF01-2).